The chain runs to 728 residues: Ophiobolin F synthase oblA (728 aa).

A (7Z)-ophiobola-7,19-dien-3-ol synthase region spans residues Met1–Glu322. Mg(2+) is bound by residues Asp93 and Asp97. Asp93 provides a ligand contact to substrate. Positions Asp93–Asp97 match the DDXXD 1 motif. Substrate contacts are provided by residues Arg182–Asp185, Asn226, Ser230–Glu234, and Arg313–Tyr314. Residues Asn226–Glu234 carry the NSE/DTE motif. Residues Leu323–Val728 form a geranylfarnesyl diphosphate synthase region. Low complexity predominate over residues Gly362 to Gly371. Residues Gly362 to Pro394 form a disordered region. Lys439, Arg442, and His471 together coordinate isopentenyl diphosphate. Mg(2+) contacts are provided by Asp478 and Asp482. The DDXXD 2 motif lies at Asp478–Asp482. Arg487 contributes to the dimethylallyl diphosphate binding site. Position 488 (Arg488) interacts with isopentenyl diphosphate. Dimethylallyl diphosphate-binding residues include Lys565, Thr566, Gln604, Asn611, Lys621, and Lys631.

In the N-terminal section; belongs to the terpene synthase family. The protein in the C-terminal section; belongs to the FPP/GGPP synthase family. Requires Mg(2+) as cofactor.

It catalyses the reaction isopentenyl diphosphate + (2E,6E)-farnesyl diphosphate = (2E,6E,10E)-geranylgeranyl diphosphate + diphosphate. The catalysed reaction is isopentenyl diphosphate + (2E,6E,10E)-geranylgeranyl diphosphate = (2E,6E,10E,14E)-geranylfarnesyl diphosphate + diphosphate. The enzyme catalyses (2E,6E,10E,14E)-geranylfarnesyl diphosphate + H2O = ophiobolin F + diphosphate. Its pathway is secondary metabolite biosynthesis; terpenoid biosynthesis. Bifunctional sesterterpene synthase; part of the gene cluster that mediates the biosynthesis of the sesterterpenes ophiobolins, fungal phytotoxins with potential anti-cancer activities. The first step of the pathway is performed by the sesterterpene synthase oblA that possesses both prenyl transferase and terpene cyclase activity, converting isopentenyl diphosphate and dimethylallyl diphosphate into geranylfarnesyl diphosphate (GFPP) and further converting GFPP into ophiobolin F, respectively. Other sesterterpenoids (C(25) terpenoids) are found as minor products of oblA. The cytochrome P450 monooxygenase oblB then catalyzes a four-step oxidative transformation of ophiobolin F to yield ophiobolin C. The function of the cytochrome P450 monooxygenase oblE has still to be determined. In Emericella variicolor (Aspergillus stellatus), this protein is Ophiobolin F synthase oblA.